A 368-amino-acid chain; its full sequence is MMVPAELFARVEFPDQQVLADAREYQNTLVKPAGSLSRLEDVGCFIAACQGQVPPRRLDRPRIVVFAGDHGVAARGVSAYPASVSLQMAQSMLDGGAAINVLARAAGASVRVADISLDHEATGPERVRRSCGSIDIEDAMTGEEVLQALQIGIRIADQEIDSGADILIPGDLGIGNTTPAAALIGTFTLAEPVVVVGRGTGIDDEGWKRKVTAVRDAMFRVRTLRQDPITVARMISSPDLTAMAAFIAQAAVRRTPVILDGAVVTAAALLANKLAPGARRWFIAGHRSPEPAHPIALDALGLTPLVDLGMRLGEGSGAAAALPLVKTAVDLMIDMSTMNDAGVDRADGADNSADSGASAGTVASDPTV.

Glu-314 functions as the Proton acceptor in the catalytic mechanism. The interval 344 to 368 is disordered; the sequence is DRADGADNSADSGASAGTVASDPTV. The span at 349 to 360 shows a compositional bias: low complexity; the sequence is ADNSADSGASAG.

The protein belongs to the CobT family.

It carries out the reaction 5,6-dimethylbenzimidazole + nicotinate beta-D-ribonucleotide = alpha-ribazole 5'-phosphate + nicotinate + H(+). It functions in the pathway nucleoside biosynthesis; alpha-ribazole biosynthesis; alpha-ribazole from 5,6-dimethylbenzimidazole: step 1/2. Catalyzes the synthesis of alpha-ribazole-5'-phosphate from nicotinate mononucleotide (NAMN) and 5,6-dimethylbenzimidazole (DMB). This is Nicotinate-nucleotide--dimethylbenzimidazole phosphoribosyltransferase from Corynebacterium efficiens (strain DSM 44549 / YS-314 / AJ 12310 / JCM 11189 / NBRC 100395).